The sequence spans 180 residues: Adenine phosphoribosyltransferase (180 aa).

The protein belongs to the purine/pyrimidine phosphoribosyltransferase family. Homodimer.

It is found in the cytoplasm. The catalysed reaction is AMP + diphosphate = 5-phospho-alpha-D-ribose 1-diphosphate + adenine. It participates in purine metabolism; AMP biosynthesis via salvage pathway; AMP from adenine: step 1/1. Catalyzes a salvage reaction resulting in the formation of AMP, that is energically less costly than de novo synthesis. The sequence is that of Adenine phosphoribosyltransferase from Sinorhizobium medicae (strain WSM419) (Ensifer medicae).